Consider the following 110-residue polypeptide: Small ribosomal subunit protein bS16 (110 aa).

Positions Ala-87–Lys-110 are disordered.

This sequence belongs to the bacterial ribosomal protein bS16 family.

This Rhodopseudomonas palustris (strain HaA2) protein is Small ribosomal subunit protein bS16.